The chain runs to 435 residues: Envelope glycoprotein M (435 aa).

Over 1–36 (MGTQKKGPRSEKVSPYDTTTPEVEALDHQMDTLNWR) the chain is Intravirion. Residues 37 to 57 (IWIIQVMMFTLGAVMLLATLI) form a helical membrane-spanning segment. The Virion surface portion of the chain corresponds to 58-111 (AASSEYTGIPCFYAAVVDYELFNATLDGGVWSGNRGGYSAPVLFLEPHSVVAFT). Residues 112-132 (YYTALTAMAMAVYTLITAAII) traverse the membrane as a helical segment. Topologically, residues 133–155 (HRETKNQRVRQSSGVAWLVVDPT) are intravirion. A helical membrane pass occupies residues 156 to 176 (TLFWGLLSLWLLNAVVLLLAY). Residues 177 to 178 (KQ) are Virion surface-facing. Residues 179–199 (IGVAATLYLGHFATSVIFTTY) form a helical membrane-spanning segment. The Intravirion segment spans residues 200–233 (FCGRGKLDETNIKAVANLRQQSVFLYRLAGPTRA). The helical transmembrane segment at 234-254 (VFVNLMAALMAICILFVSLML) threads the bilayer. The Virion surface segment spans residues 255 to 265 (ELVVANHLHTG). The helical transmembrane segment at 266–288 (LWSSVSVAMSTFSTLSVVYLIVS) threads the bilayer. Over 289-294 (ELILAH) the chain is Intravirion. The helical transmembrane segment at 295–317 (YIHVLIGPSLGTLVACATLGTAA) threads the bilayer. Topologically, residues 318 to 334 (HSYMDRLYDPISVQSPR) are virion surface. A helical membrane pass occupies residues 335–355 (LIPTTRGTLACLAVFSVVMLL). Residues 356 to 435 (LRLMRAYVYH…LYERSNSGWE (80 aa)) lie on the Intravirion side of the membrane.

The protein belongs to the herpesviridae glycoprotein M family. Interacts (via N-terminus) with gN (via N-terminus). The gM-gN heterodimer forms the gCII complex.

The protein localises to the virion membrane. Its subcellular location is the host Golgi apparatus. It localises to the host trans-Golgi network. It is found in the host endosome membrane. The protein resides in the host nucleus inner membrane. Envelope glycoprotein important for virion assembly and egress. Plays a role in the correct incorporation of gH-gL into virion membrane. Directs the glycoprotein N (gN) to the host trans-Golgi network. The chain is Envelope glycoprotein M from Homo sapiens (Human).